The following is a 385-amino-acid chain: Tetraacyldisaccharide 4'-kinase (385 aa).

60-67 (TVGGSGKT) is an ATP binding site.

This sequence belongs to the LpxK family.

It carries out the reaction a lipid A disaccharide + ATP = a lipid IVA + ADP + H(+). It functions in the pathway glycolipid biosynthesis; lipid IV(A) biosynthesis; lipid IV(A) from (3R)-3-hydroxytetradecanoyl-[acyl-carrier-protein] and UDP-N-acetyl-alpha-D-glucosamine: step 6/6. Transfers the gamma-phosphate of ATP to the 4'-position of a tetraacyldisaccharide 1-phosphate intermediate (termed DS-1-P) to form tetraacyldisaccharide 1,4'-bis-phosphate (lipid IVA). This Psychrobacter arcticus (strain DSM 17307 / VKM B-2377 / 273-4) protein is Tetraacyldisaccharide 4'-kinase.